The chain runs to 271 residues: Thiazole synthase (271 aa).

Residue Lys-104 is the Schiff-base intermediate with DXP of the active site. 1-deoxy-D-xylulose 5-phosphate contacts are provided by residues Gly-165, 192 to 193 (AG), and 214 to 215 (NT).

The protein belongs to the ThiG family. In terms of assembly, homotetramer. Forms heterodimers with either ThiH or ThiS.

It localises to the cytoplasm. The catalysed reaction is [ThiS sulfur-carrier protein]-C-terminal-Gly-aminoethanethioate + 2-iminoacetate + 1-deoxy-D-xylulose 5-phosphate = [ThiS sulfur-carrier protein]-C-terminal Gly-Gly + 2-[(2R,5Z)-2-carboxy-4-methylthiazol-5(2H)-ylidene]ethyl phosphate + 2 H2O + H(+). It functions in the pathway cofactor biosynthesis; thiamine diphosphate biosynthesis. In terms of biological role, catalyzes the rearrangement of 1-deoxy-D-xylulose 5-phosphate (DXP) to produce the thiazole phosphate moiety of thiamine. Sulfur is provided by the thiocarboxylate moiety of the carrier protein ThiS. In vitro, sulfur can be provided by H(2)S. The polypeptide is Thiazole synthase (Burkholderia lata (strain ATCC 17760 / DSM 23089 / LMG 22485 / NCIMB 9086 / R18194 / 383)).